Here is a 229-residue protein sequence, read N- to C-terminus: Adenylate kinase (229 aa).

Residues 1–9 (MLSTLAKRF) constitute a propeptide that is removed on maturation. 25-30 (GVGKGT) contacts ATP. The NMP stretch occupies residues 45–74 (STGDALRAEIRGQTPLGKRVKGIIESGGLV). Residues Thr46, Arg51, 72 to 74 (GLV), 100 to 103 (GIPR), and Gln107 contribute to the AMP site. Positions 141 to 178 (GRLFHPGSGRVYHKVTNPPKKPMTDDITGEPLIIRKDD) are LID. ATP is bound at residue Arg142. Arg175 and Arg186 together coordinate AMP. An ATP-binding site is contributed by Gly214.

Belongs to the adenylate kinase family.

It localises to the hydrogenosome. The catalysed reaction is AMP + ATP = 2 ADP. Catalyzes the reversible transfer of the terminal phosphate group between ATP and AMP. Plays an important role in cellular energy homeostasis and in adenine nucleotide metabolism. In Trichomonas vaginalis, this protein is Adenylate kinase.